A 424-amino-acid polypeptide reads, in one-letter code: Phosphomethylpyrimidine synthase (424 aa).

Residues asparagine 66, methionine 95, tyrosine 124, histidine 163, 185–187 (SRG), 226–229 (DGMR), and glutamate 265 each bind substrate. Histidine 269 is a Zn(2+) binding site. Phenylalanine 292 contributes to the substrate binding site. Histidine 333 contacts Zn(2+). Positions 408, 411, and 415 each coordinate [4Fe-4S] cluster.

Belongs to the ThiC family. Requires [4Fe-4S] cluster as cofactor.

The catalysed reaction is 5-amino-1-(5-phospho-beta-D-ribosyl)imidazole + S-adenosyl-L-methionine = 4-amino-2-methyl-5-(phosphooxymethyl)pyrimidine + CO + 5'-deoxyadenosine + formate + L-methionine + 3 H(+). Its pathway is cofactor biosynthesis; thiamine diphosphate biosynthesis. Functionally, catalyzes the synthesis of the hydroxymethylpyrimidine phosphate (HMP-P) moiety of thiamine from aminoimidazole ribotide (AIR) in a radical S-adenosyl-L-methionine (SAM)-dependent reaction. In Thermotoga sp. (strain RQ2), this protein is Phosphomethylpyrimidine synthase.